A 252-amino-acid polypeptide reads, in one-letter code: Isoprenyl transferase (252 aa).

Residue D32 is part of the active site. Residue D32 coordinates Mg(2+). Substrate is bound by residues 33-36, W37, R45, H49, and 77-79; these read GNGR and STE. The active-site Proton acceptor is the N80. Substrate contacts are provided by residues W81, R83, R200, and 206–208; that span reads RLS. E219 serves as a coordination point for Mg(2+).

Belongs to the UPP synthase family. In terms of assembly, homodimer. Mg(2+) is required as a cofactor.

Functionally, catalyzes the condensation of isopentenyl diphosphate (IPP) with allylic pyrophosphates generating different type of terpenoids. This chain is Isoprenyl transferase, found in Listeria monocytogenes serovar 1/2a (strain ATCC BAA-679 / EGD-e).